The primary structure comprises 320 residues: Sliding-clamp-loader large subunit (320 aa).

ATP-binding positions include 12-15, I24, 53-58, and R205; these read EQKY and GTGKTT.

Belongs to the Tevenvirinae sliding-clamp-loader large subunit family. In terms of assembly, the sliding-clamp-loader consists of 4 large subunits and 1 small subunit. Interacts with the sliding clamp; this interaction allows the sliding-clamp-loader to open the sliding clamp. Part of the replicase complex that includes the DNA polymerase, the polymerase clamp, the clamp loader complex, the single-stranded DNA binding protein, the primase, the helicase and the helicase assembly factor.

In terms of biological role, forms the sliding-clamp-loader together with the small subunit. Functions as an ATPase enzyme. The clamp loader holds the clamp in an open conformation and places it onto the DNA. 4 ATP molecules must bind to the sliding-clamp-loader before the latter can open the sliding clamp. ATP hydrolysis triggers the detachment of the sliding clamp from the sliding-clamp-loader, freeing the sliding clamp to track along DNA. The protein is Sliding-clamp-loader large subunit (44) of Escherichia phage RB69 (Bacteriophage RB69).